A 274-amino-acid polypeptide reads, in one-letter code: uncharacterized protein (274 aa).

The helical transmembrane segment at Ile238 to Cys258 threads the bilayer.

The protein resides in the membrane. This is an uncharacterized protein from Schizosaccharomyces pombe (strain 972 / ATCC 24843) (Fission yeast).